The chain runs to 298 residues: DegV domain-containing protein UU535 (298 aa).

In terms of domain architecture, DegV spans 5-287 (FLIMTDSSTT…KGALGIQVIA (283 aa)). Hexadecanoate contacts are provided by Ser-65 and Ser-96.

In terms of biological role, may bind long-chain fatty acids, such as palmitate, and may play a role in lipid transport or fatty acid metabolism. The chain is DegV domain-containing protein UU535 from Ureaplasma parvum serovar 3 (strain ATCC 700970).